The sequence spans 444 residues: Magnesium transporter MRS2-F (444 aa).

Residues 128 to 155 are disordered; sequence FTDMEGESSAVTSPFPALTSTTPNELEM. A compositionally biased stretch (polar residues) spans 145–155; sequence LTSTTPNELEM. A coiled-coil region spans residues 195-258; the sequence is VCLESACRSL…QKVRDELEHL (64 aa). Residues 370–390 traverse the membrane as a helical segment; that stretch reads GVMLSTATVVITAGVAVVGLF. Positions 391-393 match the Required for magnesium transport activity motif; sequence GMN. Residues 415-435 form a helical membrane-spanning segment; it reads FWETTLGTIAGCTVMYIVAMG.

The protein belongs to the CorA metal ion transporter (MIT) (TC 1.A.35.5) family.

The protein localises to the membrane. Its function is as follows. Magnesium transporter that may mediate the influx of magnesium. The polypeptide is Magnesium transporter MRS2-F (MRS2-F) (Oryza sativa subsp. indica (Rice)).